The sequence spans 155 residues: Aspartate carbamoyltransferase regulatory chain (155 aa).

4 residues coordinate Zn(2+): cysteine 112, cysteine 117, cysteine 138, and cysteine 141.

This sequence belongs to the PyrI family. Contains catalytic and regulatory chains. It depends on Zn(2+) as a cofactor.

In terms of biological role, involved in allosteric regulation of aspartate carbamoyltransferase. The sequence is that of Aspartate carbamoyltransferase regulatory chain from Methanocorpusculum labreanum (strain ATCC 43576 / DSM 4855 / Z).